A 304-amino-acid chain; its full sequence is UTP--glucose-1-phosphate uridylyltransferase 1 (304 aa).

The protein belongs to the UDPGP type 2 family.

It catalyses the reaction alpha-D-glucose 1-phosphate + UTP + H(+) = UDP-alpha-D-glucose + diphosphate. Its pathway is carbohydrate metabolism; nucleotide-sugar metabolism. This Streptococcus pyogenes serotype M3 (strain ATCC BAA-595 / MGAS315) protein is UTP--glucose-1-phosphate uridylyltransferase 1 (hasC1).